A 536-amino-acid polypeptide reads, in one-letter code: Keratin, type II cytoskeletal 4 (536 aa).

The head stretch occupies residues 1-145 (MISRQSSVRG…DPEIQKIRTA (145 aa)). At R13 the chain carries Omega-N-methylarginine. The tract at residues 146–181 (EREQIKTLNNKFASFIDKVRFLEQQNKVLETKWNLL) is coil 1A. One can recognise an IF rod domain in the interval 146–457 (EREQIKTLNN…KLLEGEECRM (312 aa)). Residues 182 to 200 (QQQTTTTSPRNLDPFFETY) are linker 1. Positions 201–293 (INALRKNLDT…LYEAELSQMQ (93 aa)) are coil 1B. Residues 294–316 (THVSDTSVVLSMDNNRNLDLDGI) are linker 12. Positions 317-454 (IAEVRAQYEE…TYRKLLEGEE (138 aa)) are coil 2. The interval 455–524 (CRMSGECKSA…TSSATITKRS (70 aa)) is tail. A disordered region spans residues 515–536 (TSSATITKRSPRTRQDPDGLQP). A compositionally biased stretch (basic and acidic residues) spans 527–536 (TRQDPDGLQP).

Belongs to the intermediate filament family. As to quaternary structure, heterotetramer of two type I and two type II keratins. keratin-4 is generally associated with keratin-13.

The polypeptide is Keratin, type II cytoskeletal 4 (Rattus norvegicus (Rat)).